Here is a 255-residue protein sequence, read N- to C-terminus: Ditrans,polycis-undecaprenyl-diphosphate synthase ((2E,6E)-farnesyl-diphosphate specific) (255 aa).

Residue D21 is part of the active site. A Mg(2+)-binding site is contributed by D21. Substrate-binding positions include 22-25 (GNGR), W26, R34, H38, and 66-68 (SSE). The active-site Proton acceptor is N69. Substrate is bound by residues W70, R72, R189, and 195–197 (RIS). E208 is a binding site for Mg(2+).

This sequence belongs to the UPP synthase family. As to quaternary structure, homodimer. Mg(2+) is required as a cofactor.

It catalyses the reaction 8 isopentenyl diphosphate + (2E,6E)-farnesyl diphosphate = di-trans,octa-cis-undecaprenyl diphosphate + 8 diphosphate. In terms of biological role, catalyzes the sequential condensation of isopentenyl diphosphate (IPP) with (2E,6E)-farnesyl diphosphate (E,E-FPP) to yield (2Z,6Z,10Z,14Z,18Z,22Z,26Z,30Z,34E,38E)-undecaprenyl diphosphate (di-trans,octa-cis-UPP). UPP is the precursor of glycosyl carrier lipid in the biosynthesis of bacterial cell wall polysaccharide components such as peptidoglycan and lipopolysaccharide. In Xylella fastidiosa (strain 9a5c), this protein is Ditrans,polycis-undecaprenyl-diphosphate synthase ((2E,6E)-farnesyl-diphosphate specific).